A 361-amino-acid chain; its full sequence is Chorismate synthase (361 aa).

2 residues coordinate NADP(+): arginine 48 and arginine 54. FMN-binding positions include 125 to 127 (RSS), 240 to 241 (NA), glycine 286, 301 to 305 (KPTSS), and arginine 327.

Belongs to the chorismate synthase family. Homotetramer. The cofactor is FMNH2.

The catalysed reaction is 5-O-(1-carboxyvinyl)-3-phosphoshikimate = chorismate + phosphate. The protein operates within metabolic intermediate biosynthesis; chorismate biosynthesis; chorismate from D-erythrose 4-phosphate and phosphoenolpyruvate: step 7/7. Its function is as follows. Catalyzes the anti-1,4-elimination of the C-3 phosphate and the C-6 proR hydrogen from 5-enolpyruvylshikimate-3-phosphate (EPSP) to yield chorismate, which is the branch point compound that serves as the starting substrate for the three terminal pathways of aromatic amino acid biosynthesis. This reaction introduces a second double bond into the aromatic ring system. The polypeptide is Chorismate synthase (Magnetococcus marinus (strain ATCC BAA-1437 / JCM 17883 / MC-1)).